Reading from the N-terminus, the 263-residue chain is MVGALEALISQGHGGERVAKRQRSATLLDLDILDCPICCEGLTCPIFQCENGHLACSSCCPKLRNKCPACPMENILESILVTCPNDMFGCTESFLYGKKSTHEEECIFSLCSCPSLDCEYSGRYEDLYDHYKLTHISNSYWTTNCFRSSIPYKAPMLISDKIQITRVYEKKILFAVQCFRESCGVYVTVSCIAPSAPEVGQFSYQISYTVDEHTMVYRSPQMKRVRKVSFETPQENFMLIPHNLLRSELLDIKLSIVETSNQE.

The RING-type; degenerate zinc-finger motif lies at 35 to 71; it reads CPICCEGLTCPIFQCENGHLACSSCCPKLRNKCPACP. The segment at 75–261 is SBD; that stretch reads ILESILVTCP…IKLSIVETSN (187 aa). The SIAH-type zinc finger occupies 78–136; it reads SILVTCPNDMFGCTESFLYGKKSTHEEECIFSLCSCPSLDCEYSGRYEDLYDHYKLTHI. Zn(2+) contacts are provided by C83, C90, H102, C106, C113, C118, H130, and H135.

It belongs to the SINA (Seven in absentia) family.

It carries out the reaction S-ubiquitinyl-[E2 ubiquitin-conjugating enzyme]-L-cysteine + [acceptor protein]-L-lysine = [E2 ubiquitin-conjugating enzyme]-L-cysteine + N(6)-ubiquitinyl-[acceptor protein]-L-lysine.. The protein operates within protein modification; protein ubiquitination. Functionally, E3 ubiquitin-protein ligase that mediates ubiquitination and subsequent proteasomal degradation of target proteins. E3 ubiquitin ligases accept ubiquitin from an E2 ubiquitin-conjugating enzyme in the form of a thioester and then directly transfers the ubiquitin to targeted substrates. It probably triggers the ubiquitin-mediated degradation of different substrates. The polypeptide is E3 ubiquitin-protein ligase SINA-like 8 (Arabidopsis thaliana (Mouse-ear cress)).